The primary structure comprises 840 residues: Subtilisin-like protease SBT2.3 (840 aa).

The signal sequence occupies residues Met-1–Gly-27. A propeptide spans Gln-28–Ala-146 (activation peptide). The Inhibitor I9 domain occupies Val-38–Ala-146. The span at Lys-61–Ser-81 shows a compositional bias: basic residues. A disordered region spans residues Lys-61–Ser-85. N-linked (GlcNAc...) asparagine glycosylation is present at Asn-72. A Peptidase S8 domain is found at Thr-148–Leu-694. Asp-180 serves as the catalytic Charge relay system. N-linked (GlcNAc...) asparagine glycosylation is found at Asn-193 and Asn-241. His-255 functions as the Charge relay system in the catalytic mechanism. 5 N-linked (GlcNAc...) asparagine glycosylation sites follow: Asn-398, Asn-427, Asn-480, Asn-525, and Asn-553. The PA domain maps to Met-418–Ser-513. Ser-619 acts as the Charge relay system in catalysis. N-linked (GlcNAc...) asparagine glycosylation is found at Asn-689, Asn-715, Asn-723, Asn-767, and Asn-808.

Belongs to the peptidase S8 family.

The protein localises to the secreted. This is Subtilisin-like protease SBT2.3 from Arabidopsis thaliana (Mouse-ear cress).